The chain runs to 73 residues: Conotoxin reg3a (73 aa).

The first 20 residues, 1–20 (MMSKLRVLLTICLLLFPLSA), serve as a signal peptide directing secretion. Residues 21–55 (LPLDGDQPADQPAKRMWNGKLAARKPRFDKYDLVR) constitute a propeptide that is removed on maturation. 4-hydroxyproline is present on residues P59, P60, P65, and P70. C72 carries the cysteine amide modification.

In terms of processing, contains 3 disulfide bonds. Expressed by the venom duct.

Its subcellular location is the secreted. The chain is Conotoxin reg3a from Conus regius (Crown cone).